The primary structure comprises 116 residues: uncharacterized protein (116 aa).

A CHY-type zinc finger spans residues 1–72; the sequence is MCKHVLNAQV…SDEYCPNCDN (72 aa). Zn(2+)-binding residues include cysteine 2, histidine 4, cysteine 16, cysteine 17, cysteine 23, cysteine 26, histidine 27, histidine 33, cysteine 45, cysteine 48, cysteine 67, and cysteine 70.

It localises to the cytoplasm. This is an uncharacterized protein from Schizosaccharomyces pombe (strain 972 / ATCC 24843) (Fission yeast).